A 59-amino-acid polypeptide reads, in one-letter code: ATP synthase subunit J, mitochondrial (59 aa).

The helical transmembrane segment at 9–25 (ILKVYWPFFVAGAAVYY) threads the bilayer.

It belongs to the ATPase j subunit family. In terms of assembly, F-type ATPases have 2 components, CF(1) - the catalytic core - and CF(0) - the membrane proton channel. In yeast, the dimeric form of ATP synthase consists of 17 polypeptides: alpha, beta, gamma, delta, epsilon, 4 (B), 5 (OSCP), 6 (A), 8, 9 (C), d, E (Tim11), f, g, h, i/j and k.

It localises to the mitochondrion membrane. Mitochondrial membrane ATP synthase (F(1)F(0) ATP synthase or Complex V) produces ATP from ADP in the presence of a proton gradient across the membrane which is generated by electron transport complexes of the respiratory chain. F-type ATPases consist of two structural domains, F(1) - containing the extramembraneous catalytic core and F(0) - containing the membrane proton channel, linked together by a central stalk and a peripheral stalk. During catalysis, ATP synthesis in the catalytic domain of F(1) is coupled via a rotary mechanism of the central stalk subunits to proton translocation. Part of the complex F(0) domain. Minor subunit located with subunit a in the membrane. This is ATP synthase subunit J, mitochondrial (ATP18) from Saccharomyces cerevisiae (strain ATCC 204508 / S288c) (Baker's yeast).